Here is a 281-residue protein sequence, read N- to C-terminus: Putative phosphoenolpyruvate synthase regulatory protein (281 aa).

161–168 (GVSRSGKT) provides a ligand contact to ADP.

Belongs to the pyruvate, phosphate/water dikinase regulatory protein family. PSRP subfamily.

It catalyses the reaction [pyruvate, water dikinase] + ADP = [pyruvate, water dikinase]-phosphate + AMP + H(+). The enzyme catalyses [pyruvate, water dikinase]-phosphate + phosphate + H(+) = [pyruvate, water dikinase] + diphosphate. In terms of biological role, bifunctional serine/threonine kinase and phosphorylase involved in the regulation of the phosphoenolpyruvate synthase (PEPS) by catalyzing its phosphorylation/dephosphorylation. This Herminiimonas arsenicoxydans protein is Putative phosphoenolpyruvate synthase regulatory protein.